Reading from the N-terminus, the 533-residue chain is Probable RNA-binding protein 46 (533 aa).

RRM domains are found at residues 61-139 (CEVF…VSLD), 141-223 (CRLF…WADP), and 236-308 (KVLY…LAKP). The interval 338-362 (ESHSKSLGKPPTLPTRLNGQHSPSP) is disordered.

In terms of assembly, interacts with YTHDC2, MEIOC, MOV10, CNOT6L, DDX4, UPF1 and PABPC1. Expressed in the testis and ovary (at protein level). Expressed in spermatogonia and spermatocytes in testis (at protein level).

The protein resides in the cytoplasm. Essential for male and female fertility, playing a crucial role in regulating germ cell development by ensuring the proper progression of meiosis prophase I. Regulates mitotic-to-meiotic transition in spermatogenesis by forming a complex with MEIOC and YTHDC2 which recognizes and down-regulates mitotic transcripts for a successful meiotic entry. Required for normal synaptonemal complex formation during meiosis, binding meiotic cohesin subunit mRNAs containing GCCUAU/GUUCGA motifs in their 3'UTRs regions and positively regulating their translation. Required for spermatogonial differentiation in both developing and adult testis. This Mus musculus (Mouse) protein is Probable RNA-binding protein 46.